We begin with the raw amino-acid sequence, 194 residues long: ATP-dependent Clp protease proteolytic subunit (194 aa).

S97 serves as the catalytic Nucleophile. The active site involves H122.

The protein belongs to the peptidase S14 family. As to quaternary structure, fourteen ClpP subunits assemble into 2 heptameric rings which stack back to back to give a disk-like structure with a central cavity, resembling the structure of eukaryotic proteasomes.

The protein resides in the cytoplasm. The catalysed reaction is Hydrolysis of proteins to small peptides in the presence of ATP and magnesium. alpha-casein is the usual test substrate. In the absence of ATP, only oligopeptides shorter than five residues are hydrolyzed (such as succinyl-Leu-Tyr-|-NHMec, and Leu-Tyr-Leu-|-Tyr-Trp, in which cleavage of the -Tyr-|-Leu- and -Tyr-|-Trp bonds also occurs).. In terms of biological role, cleaves peptides in various proteins in a process that requires ATP hydrolysis. Has a chymotrypsin-like activity. Plays a major role in the degradation of misfolded proteins. In Lactobacillus helveticus (strain DPC 4571), this protein is ATP-dependent Clp protease proteolytic subunit.